A 136-amino-acid chain; its full sequence is uncharacterized protein (136 aa).

It belongs to the MG439/MG440 family.

This is an uncharacterized protein from Mycoplasma pneumoniae (strain ATCC 29342 / M129 / Subtype 1) (Mycoplasmoides pneumoniae).